The primary structure comprises 208 residues: Small ribosomal subunit protein uS4 (208 aa).

Residues 24 to 52 (GVKPFDVKTKKANKAPGQHGQARGGKQSE) are disordered. Residues 98–160 (SRLDNVVYRM…AKQQLRIKNA (63 aa)) enclose the S4 RNA-binding domain.

The protein belongs to the universal ribosomal protein uS4 family. As to quaternary structure, part of the 30S ribosomal subunit. Contacts protein S5. The interaction surface between S4 and S5 is involved in control of translational fidelity.

Functionally, one of the primary rRNA binding proteins, it binds directly to 16S rRNA where it nucleates assembly of the body of the 30S subunit. With S5 and S12 plays an important role in translational accuracy. The chain is Small ribosomal subunit protein uS4 from Acinetobacter baumannii (strain ACICU).